We begin with the raw amino-acid sequence, 397 residues long: Transcription factor xenB (397 aa).

Residues 220 to 249 form a disordered region; the sequence is TISDFETGDRQTISRSDTNSEVRPIPESPS. The span at 229-240 shows a compositional bias: polar residues; it reads RQTISRSDTNSE.

Functionally, transcription factor; part of the gene cluster that mediates the biosynthesis of xenoacremones such as xenoacremone A, a compound that shows inhibitory activity toward the PI3K/AKT signaling pathway and which has the ability to induce apoptosis of A549 lung cancer cells. Acts as a positive regulator of the xenoacremones biosynthesis gene cluster. The protein is Transcription factor xenB of Xenoacremonium sinensis (Endophyte fungus).